Consider the following 180-residue polypeptide: Ribosome maturation factor RimM (180 aa).

The PRC barrel domain maps to 104 to 177 (EGEFHLLDLV…WLLLTPPPGL (74 aa)).

It belongs to the RimM family. In terms of assembly, binds ribosomal protein uS19.

It localises to the cytoplasm. An accessory protein needed during the final step in the assembly of 30S ribosomal subunit, possibly for assembly of the head region. Essential for efficient processing of 16S rRNA. May be needed both before and after RbfA during the maturation of 16S rRNA. It has affinity for free ribosomal 30S subunits but not for 70S ribosomes. This is Ribosome maturation factor RimM from Synechococcus sp. (strain CC9902).